Reading from the N-terminus, the 297-residue chain is uncharacterized protein (297 aa).

Helical transmembrane passes span 1–21 (MSWIIFYTIIAALLILDLGII), 32–52 (GSILLSLFYFIISCLFGIYVY), 72–92 (AMALDNIFIISIIFQFFNIPS), 98–118 (VLFFGIIGVIIFKAIIIYGGI), 120–140 (LIHKFSWLLYILAVILIATGI), 194–214 (ILIETIDLVFAIDSIAAIFAI), 218–238 (VYIIYTSNIFAILGLRSLFFC), 253–273 (LALILIFIGFKIFIHHYIEIP), and 274–294 (AYISLTVTISSLLFGIIASIL).

This sequence belongs to the TerC family.

It localises to the cell membrane. This is an uncharacterized protein from Rickettsia prowazekii (strain Madrid E).